The chain runs to 510 residues: MVFSRFFRVTGVNLSRRVYSRISSSSSPSLESIPWIHKASNFTLYGSFHASSVETQVSANDASQDAERICKILTKFTDSKVETLLNEASVKLSPALIEEVLKKLSNAGVLALSVFKWAENQKGFKHTTSNYNALIESLGKIKQFKLIWSLVDDMKAKKLLSKETFALISRRYARARKVKEAIGAFHKMEEFGFKMESSDFNRMLDTLSKSRNVGDAQKVFDKMKKKRFEPDIKSYTILLEGWGQELNLLRVDEVNREMKDEGFEPDVVAYGIIINAHCKAKKYEEAIRFFNEMEQRNCKPSPHIFCSLINGLGSEKKLNDALEFFERSKSSGFPLEAPTYNALVGAYCWSQRMEDAYKTVDEMRLKGVGPNARTYDIILHHLIRMQRSKEAYEVYQTMSCEPTVSTYEIMVRMFCNKERLDMAIKIWDEMKGKGVLPGMHMFSSLITALCHENKLDEACEYFNEMLDVGIRPPGHMFSRLKQTLLDEGRKDKVTDLVVKMDRLRKTQLVG.

Residues 1–14 (MVFSRFFRVTGVNL) constitute a mitochondrion transit peptide. 10 PPR repeats span residues 127-157 (TTSNYNALIESLGKIKQFKLIWSLVDDMKAK), 161-195 (SKETFALISRRYARARKVKEAIGAFHKMEEFGFKM), 196-230 (ESSDFNRMLDTLSKSRNVGDAQKVFDKMKKKRFEP), 231-265 (DIKSYTILLEGWGQELNLLRVDEVNREMKDEGFEP), 266-300 (DVVAYGIIINAHCKAKKYEEAIRFFNEMEQRNCKP), 301-335 (SPHIFCSLINGLGSEKKLNDALEFFERSKSSGFPL), 336-370 (EAPTYNALVGAYCWSQRMEDAYKTVDEMRLKGVGP), 371-401 (NARTYDIILHHLIRMQRSKEAYEVYQTMSCE), 403-437 (TVSTYEIMVRMFCNKERLDMAIKIWDEMKGKGVLP), and 438-472 (GMHMFSSLITALCHENKLDEACEYFNEMLDVGIRP).

Belongs to the PPR family. P subfamily.

The protein resides in the mitochondrion. In Arabidopsis thaliana (Mouse-ear cress), this protein is Pentatricopeptide repeat-containing protein At1g71060, mitochondrial.